The chain runs to 54 residues: Large ribosomal subunit protein bL32c (54 aa).

Belongs to the bacterial ribosomal protein bL32 family.

The protein resides in the plastid. The protein localises to the chloroplast. This chain is Large ribosomal subunit protein bL32c, found in Panax ginseng (Korean ginseng).